The primary structure comprises 444 residues: Chromosome partition protein MukF (444 aa).

The interval 212-240 (LDETSGNLRELQDTLNAAGDKLQAQLLRI) is leucine-zipper.

Belongs to the MukF family. Interacts, and probably forms a ternary complex, with MukE and MukB via its C-terminal region. The complex formation is stimulated by calcium or magnesium. It is required for an interaction between MukE and MukB.

It localises to the cytoplasm. The protein localises to the nucleoid. Functionally, involved in chromosome condensation, segregation and cell cycle progression. May participate in facilitating chromosome segregation by condensation DNA from both sides of a centrally located replisome during cell division. Not required for mini-F plasmid partitioning. Probably acts via its interaction with MukB and MukE. Overexpression results in anucleate cells. It has a calcium binding activity. The sequence is that of Chromosome partition protein MukF from Haemophilus influenzae (strain ATCC 51907 / DSM 11121 / KW20 / Rd).